Here is a 228-residue protein sequence, read N- to C-terminus: Superoxide dismutase [Mn], mitochondrial (228 aa).

A mitochondrion-targeting transit peptide spans 1 to 24 (MALRTLVSRRTLATGLGFRQQLRG). The Mn(2+) site is built by H52, H100, D189, and H193.

This sequence belongs to the iron/manganese superoxide dismutase family. As to quaternary structure, homotetramer. Requires Mn(2+) as cofactor.

It localises to the mitochondrion matrix. It carries out the reaction 2 superoxide + 2 H(+) = H2O2 + O2. Its function is as follows. Destroys superoxide anion radicals which are normally produced within the cells and which are toxic to biological systems. This is Superoxide dismutase [Mn], mitochondrial (SODA) from Nicotiana plumbaginifolia (Leadwort-leaved tobacco).